The following is a 158-amino-acid chain: uncharacterized protein (158 aa).

4 helical membrane passes run 12–32 (IITL…AVVV), 39–59 (LDIL…SLSV), 90–110 (LIYL…FNTI), and 113–133 (IIST…WLPL).

The protein localises to the cell membrane. This is an uncharacterized protein from Mycoplasma genitalium (strain ATCC 33530 / DSM 19775 / NCTC 10195 / G37) (Mycoplasmoides genitalium).